Consider the following 917-residue polypeptide: Probable dipeptidyl-aminopeptidase B (917 aa).

Positions 1–78 (MGVEKRINDE…EGDLEEGFVP (78 aa)) are disordered. Residues 1–90 (MGVEKRINDE…GGWSAPRKVS (90 aa)) lie on the Cytoplasmic side of the membrane. Positions 16–26 (AERDDKSRDSI) are enriched in basic and acidic residues. The span at 27–49 (DSTSTASISLALLGGANGSAHGS) shows a compositional bias: low complexity. Residues 55–65 (RKSENQEKYHD) are compositionally biased toward basic and acidic residues. Residues 91 to 111 (VIFTLIVTLCIAGWLVAFFVL) traverse the membrane as a helical; Signal-anchor for type II membrane protein segment. Topologically, residues 112–917 (LGRHKDSSKD…LGLINILRNG (806 aa)) are vacuolar. 2 N-linked (GlcNAc...) asparagine glycosylation sites follow: Asn350 and Asn465. Residue Ser754 is the Charge relay system of the active site. A glycan (N-linked (GlcNAc...) asparagine) is linked at Asn813. Catalysis depends on charge relay system residues Asp831 and His864.

This sequence belongs to the peptidase S9B family.

It is found in the vacuole membrane. The enzyme catalyses Release of an N-terminal dipeptide, Xaa-Yaa-|-Zaa-, from a polypeptide, preferentially when Yaa is Pro, provided Zaa is neither Pro nor hydroxyproline.. Functionally, type IV dipeptidyl-peptidase which removes N-terminal dipeptides sequentially from polypeptides having unsubstituted N-termini provided that the penultimate residue is proline. In Coccidioides posadasii (strain C735) (Valley fever fungus), this protein is Probable dipeptidyl-aminopeptidase B (DAPB).